A 304-amino-acid polypeptide reads, in one-letter code: uncharacterized protein (304 aa).

Helical transmembrane passes span 9–29, 67–87, 100–120, 131–151, 159–179, 189–209, 222–242, 252–272, and 278–298; these read VFYV…SIHF, IILY…GNMF, AGSI…GIFF, EFYI…INSS, FFLG…QNLI, AVVI…CLAF, IGML…GMLM, ITVF…IGYL, and INIY…LALK. EamA domains are found at residues 13–148 and 171–298; these read LLMG…IFVI and FIQS…LALK.

Belongs to the EamA transporter family.

It is found in the cell membrane. This is an uncharacterized protein from Haemophilus influenzae (strain ATCC 51907 / DSM 11121 / KW20 / Rd).